The chain runs to 63 residues: Cytochrome c oxidase subunit 7C, mitochondrial (63 aa).

A mitochondrion-targeting transit peptide spans 1 to 16; the sequence is MLGQSIRRFTTSVVRR. Residues 17 to 33 lie on the Mitochondrial matrix side of the membrane; it reads SHYEEGPGKNLPFSVEN. Lys-25 is subject to N6-acetyllysine; alternate. Lys-25 is modified (N6-succinyllysine; alternate). The chain crosses the membrane as a helical span at residues 34-60; that stretch reads KWRLLAMMTLYFGSGFAAPFFIVRHQL. Residues 61–63 are Mitochondrial intermembrane-facing; sequence LKK.

The protein belongs to the cytochrome c oxidase VIIc family. In terms of assembly, component of the cytochrome c oxidase (complex IV, CIV), a multisubunit enzyme composed of 14 subunits. The complex is composed of a catalytic core of 3 subunits MT-CO1, MT-CO2 and MT-CO3, encoded in the mitochondrial DNA, and 11 supernumerary subunits COX4I, COX5A, COX5B, COX6A, COX6B, COX6C, COX7A, COX7B, COX7C, COX8 and NDUFA4, which are encoded in the nuclear genome. The complex exists as a monomer or a dimer and forms supercomplexes (SCs) in the inner mitochondrial membrane with NADH-ubiquinone oxidoreductase (complex I, CI) and ubiquinol-cytochrome c oxidoreductase (cytochrome b-c1 complex, complex III, CIII), resulting in different assemblies (supercomplex SCI(1)III(2)IV(1) and megacomplex MCI(2)III(2)IV(2)). Interacts with RAB5IF.

Its subcellular location is the mitochondrion inner membrane. It participates in energy metabolism; oxidative phosphorylation. Its function is as follows. Component of the cytochrome c oxidase, the last enzyme in the mitochondrial electron transport chain which drives oxidative phosphorylation. The respiratory chain contains 3 multisubunit complexes succinate dehydrogenase (complex II, CII), ubiquinol-cytochrome c oxidoreductase (cytochrome b-c1 complex, complex III, CIII) and cytochrome c oxidase (complex IV, CIV), that cooperate to transfer electrons derived from NADH and succinate to molecular oxygen, creating an electrochemical gradient over the inner membrane that drives transmembrane transport and the ATP synthase. Cytochrome c oxidase is the component of the respiratory chain that catalyzes the reduction of oxygen to water. Electrons originating from reduced cytochrome c in the intermembrane space (IMS) are transferred via the dinuclear copper A center (CU(A)) of subunit 2 and heme A of subunit 1 to the active site in subunit 1, a binuclear center (BNC) formed by heme A3 and copper B (CU(B)). The BNC reduces molecular oxygen to 2 water molecules using 4 electrons from cytochrome c in the IMS and 4 protons from the mitochondrial matrix. This is Cytochrome c oxidase subunit 7C, mitochondrial (COX7C) from Sus scrofa (Pig).